The following is a 277-amino-acid chain: Phosphatidylglycerol--prolipoprotein diacylglyceryl transferase (277 aa).

The next 4 helical transmembrane spans lie at 18 to 38, 54 to 74, 91 to 111, and 115 to 135; these read IAIY…YFMA, DLLV…YVIF, EGGI…IVFA, and GLSF…GQAI. Arginine 137 contacts a 1,2-diacyl-sn-glycero-3-phospho-(1'-sn-glycerol). Helical transmembrane passes span 177-197, 205-225, and 236-256; these read QPTF…LLLL, GELF…IEGM, and LRTA…LWVY.

Belongs to the Lgt family.

It is found in the cell membrane. It catalyses the reaction L-cysteinyl-[prolipoprotein] + a 1,2-diacyl-sn-glycero-3-phospho-(1'-sn-glycerol) = an S-1,2-diacyl-sn-glyceryl-L-cysteinyl-[prolipoprotein] + sn-glycerol 1-phosphate + H(+). It functions in the pathway protein modification; lipoprotein biosynthesis (diacylglyceryl transfer). Functionally, catalyzes the transfer of the diacylglyceryl group from phosphatidylglycerol to the sulfhydryl group of the N-terminal cysteine of a prolipoprotein, the first step in the formation of mature lipoproteins. This is Phosphatidylglycerol--prolipoprotein diacylglyceryl transferase from Shouchella clausii (strain KSM-K16) (Alkalihalobacillus clausii).